Reading from the N-terminus, the 1373-residue chain is DNA-directed RNA polymerase subunit beta (1373 aa).

It belongs to the RNA polymerase beta chain family. As to quaternary structure, the RNAP catalytic core consists of 2 alpha, 1 beta, 1 beta' and 1 omega subunit. When a sigma factor is associated with the core the holoenzyme is formed, which can initiate transcription.

It carries out the reaction RNA(n) + a ribonucleoside 5'-triphosphate = RNA(n+1) + diphosphate. Its function is as follows. DNA-dependent RNA polymerase catalyzes the transcription of DNA into RNA using the four ribonucleoside triphosphates as substrates. The sequence is that of DNA-directed RNA polymerase subunit beta from Rickettsia akari (strain Hartford).